The sequence spans 168 residues: GTP-dependent dephospho-CoA kinase (168 aa).

The GTP site is built by Asp40, Val41, Val42, Asp59, and Glu112.

This sequence belongs to the GTP-dependent DPCK family.

The enzyme catalyses 3'-dephospho-CoA + GTP = GDP + CoA + H(+). It participates in cofactor biosynthesis; coenzyme A biosynthesis. In terms of biological role, catalyzes the GTP-dependent phosphorylation of the 3'-hydroxyl group of dephosphocoenzyme A to form coenzyme A (CoA). This chain is GTP-dependent dephospho-CoA kinase, found in Methanoregula boonei (strain DSM 21154 / JCM 14090 / 6A8).